A 750-amino-acid polypeptide reads, in one-letter code: Glycerophosphodiester phosphodiesterase GDPDL7 (750 aa).

Residues 1 to 17 (MLRFIIFFSLFIHLCVA) form the signal peptide. 2 consecutive GP-PDE domains span residues 41–339 (PAVV…SQSI) and 355–654 (ALVI…TRYL). Asn134, Asn304, Asn603, and Asn716 each carry an N-linked (GlcNAc...) asparagine glycan.

It belongs to the glycerophosphoryl diester phosphodiesterase family. As to expression, expressed in flowers and siliques.

It carries out the reaction a sn-glycero-3-phosphodiester + H2O = an alcohol + sn-glycerol 3-phosphate + H(+). The sequence is that of Glycerophosphodiester phosphodiesterase GDPDL7 from Arabidopsis thaliana (Mouse-ear cress).